The sequence spans 228 residues: Ribose-5-phosphate isomerase A (228 aa).

Substrate-binding positions include threonine 29–threonine 32, aspartate 84–aspartate 87, and lysine 97–glycine 100. The active-site Proton acceptor is the glutamate 106. Lysine 124 lines the substrate pocket.

This sequence belongs to the ribose 5-phosphate isomerase family. As to quaternary structure, homodimer.

It carries out the reaction aldehydo-D-ribose 5-phosphate = D-ribulose 5-phosphate. Its pathway is carbohydrate degradation; pentose phosphate pathway; D-ribose 5-phosphate from D-ribulose 5-phosphate (non-oxidative stage): step 1/1. In terms of biological role, catalyzes the reversible conversion of ribose-5-phosphate to ribulose 5-phosphate. The polypeptide is Ribose-5-phosphate isomerase A (Sphingopyxis alaskensis (strain DSM 13593 / LMG 18877 / RB2256) (Sphingomonas alaskensis)).